The following is an 835-amino-acid chain: Serine/threonine-protein kinase TNNI3K (835 aa).

Residues 21–51 (SESYVITIERLEDDLQIKEKELTELRNIFGS) are a coiled coil. ANK repeat units lie at residues 66–96 (NGLSLLHLCCICGGKKSHIRTLMLKGLRPSR), 100–129 (NGFTALHLAVYKDNAELITSLLHSGADIQQ), 133–162 (GGLTALHIATIAGHLEAADVLLQHGANVNI), 166–195 (VFFTPLHIAAYYGHEQVTRLLLKFGADVNV), 199–228 (VGDRPLHLASAKGFLNIAKLLMEEGSKADV), 234–263 (EDHVPLHFCSRFGHHDIVKYLLQSDLEVQP), 269–298 (YGDTPLHLACYNGKFEVAKEIIQISGTESL), 304–335 (FSETAFHSACTYGKSIDLVKFLLDQNVININH), 339–368 (DGHTGLHSACYHGHIRLVQFLLDNGADMNL), and 381–410 (DEQTCLMWAYEKGHDAIVTLLKHYKRPQDE). A Protein kinase domain is found at 463 to 723 (IEFHEIIGSG…EVVMKLEECL (261 aa)). ATP is bound by residues 469–477 (IGSGSFGKV) and lysine 490. The active-site Proton acceptor is the aspartate 588. Over residues 732-746 (ASSNSSGSLSPSSSS) the composition is skewed to low complexity. Residues 732–751 (ASSNSSGSLSPSSSSDCLVN) are disordered.

It belongs to the protein kinase superfamily. TKL Ser/Thr protein kinase family. MAP kinase kinase kinase subfamily. As to quaternary structure, interacts with TNNI3, ACTC1, ACTA1, MYBPC3, AIP, FABP3 and HADHB. The cofactor is Mg(2+). In terms of processing, autophosphorylated. As to expression, highly expressed in both adult and fetal heart.

Its subcellular location is the nucleus. It is found in the cytoplasm. It catalyses the reaction L-seryl-[protein] + ATP = O-phospho-L-seryl-[protein] + ADP + H(+). It carries out the reaction L-threonyl-[protein] + ATP = O-phospho-L-threonyl-[protein] + ADP + H(+). Its function is as follows. May play a role in cardiac physiology. This is Serine/threonine-protein kinase TNNI3K from Homo sapiens (Human).